Here is a 590-residue protein sequence, read N- to C-terminus: 4-oxocyclohex-2-ene-1-carboxylate 5-dehydrogenase (590 aa).

This sequence belongs to the FAD-dependent oxidoreductase 2 family. Forms multimers. The cofactor is FAD.

It carries out the reaction 4-oxocyclohex-2-ene-1-carboxylate + NAD(+) = 4-oxocyclohexa-2,5-diene-1-carboxylate + NADH + H(+). In terms of biological role, desaturase involved in a cyclohexanecarboxylate (CHCA) degradation pathway. Probably catalyzes the conversion of 4-oxocyclohexenecarboxylate to 4-oxocyclohex-2,5-dienecarboxylate, which is spontaneously isomerized to 4-hydroxybenzoate (4-HBA). The protein is 4-oxocyclohex-2-ene-1-carboxylate 5-dehydrogenase of Sinomonas cyclohexanicum (Corynebacterium cyclohexanicum).